The following is a 679-amino-acid chain: Transmembrane protein 214-B (679 aa).

The interval 1 to 94 (MASGAPDGKW…KKKPQSGDSV (94 aa)) is disordered. A compositionally biased stretch (basic and acidic residues) spans 18 to 30 (KSGERREGERKAL). 3 N-linked (GlcNAc...) asparagine glycosylation sites follow: N70, N298, and N322. The next 2 membrane-spanning stretches (helical) occupy residues 468–488 (GGFP…GSVL) and 606–626 (LLLH…EAAV).

The protein belongs to the TMEM214 family. Constitutively interacts with CASP4; required for the localization of procaspase 4 to the ER.

The protein localises to the endoplasmic reticulum membrane. In terms of biological role, critical mediator, in cooperation with CASP4, of endoplasmic reticulum-stress induced apoptosis. Required or the activation of CASP4 following endoplasmic reticulum stress. This Xenopus laevis (African clawed frog) protein is Transmembrane protein 214-B (tmem214-b).